The primary structure comprises 508 residues: MARPALAASLEAVLGDRGNANRVFEILELLAAKEEEDVLCAARTCRRLFAALLRRGELFAGSLPAEEDALRGNYSAEEKYKIWMRHRYNDCVESLSELLGHDSFQVKESSLCTLMKFVELEAECPLVAEQWKGSIAFPRHLLKVVVNGLIPIHEDASLLISRFQEYMEYEDVRYFVMKVVTESIGQVMQKIKERPLPFYQQNVFSLISPINMPNKERDMVKFMMKQDNREEWKVSKLQAHKQAFERMWLTFLKHQLPSGLYKKVLVILHDSILPYMNEPTLMIDFLTVAYGVGGAISLLALNGLFILIHQHNLEYPDFYKKLYSLLDPSIYHVKYRARFFHLADLFLSSSHLPAYLVAAFIKRLSRLALTAPPEALLMVIPFICNLFRRHPACKVLMHRPNGPQDLSEDPYIMEQEEPSESRALESSLWELQSLQNHYHPDVAQAAAILNQSLSEIEDDISGLLELSASELFDKEIKKTSANVPLEFEQVRGLFGKKNDIIAEHFALD.

3 helical membrane passes run 288–308 (VAYG…FILI), 341–361 (HLAD…AAFI), and 367–387 (LALT…CNLF).

This sequence belongs to the CBF/MAK21 family.

It is found in the nucleus membrane. The protein resides in the nucleus. It localises to the nucleolus. The polypeptide is Nucleolar complex protein 4 homolog (NOC4L) (Gallus gallus (Chicken)).